We begin with the raw amino-acid sequence, 320 residues long: Lipoyl synthase (320 aa).

Positions 67, 72, 78, 93, 97, 100, and 307 each coordinate [4Fe-4S] cluster. The 218-residue stretch at 79-296 (FNHGTATFMI…RDKANEMGFE (218 aa)) folds into the Radical SAM core domain.

This sequence belongs to the radical SAM superfamily. Lipoyl synthase family. It depends on [4Fe-4S] cluster as a cofactor.

The protein resides in the cytoplasm. The catalysed reaction is [[Fe-S] cluster scaffold protein carrying a second [4Fe-4S](2+) cluster] + N(6)-octanoyl-L-lysyl-[protein] + 2 oxidized [2Fe-2S]-[ferredoxin] + 2 S-adenosyl-L-methionine + 4 H(+) = [[Fe-S] cluster scaffold protein] + N(6)-[(R)-dihydrolipoyl]-L-lysyl-[protein] + 4 Fe(3+) + 2 hydrogen sulfide + 2 5'-deoxyadenosine + 2 L-methionine + 2 reduced [2Fe-2S]-[ferredoxin]. It participates in protein modification; protein lipoylation via endogenous pathway; protein N(6)-(lipoyl)lysine from octanoyl-[acyl-carrier-protein]: step 2/2. Functionally, catalyzes the radical-mediated insertion of two sulfur atoms into the C-6 and C-8 positions of the octanoyl moiety bound to the lipoyl domains of lipoate-dependent enzymes, thereby converting the octanoylated domains into lipoylated derivatives. This is Lipoyl synthase from Haemophilus influenzae (strain 86-028NP).